The following is a 130-amino-acid chain: MSLNVRVITPDRIVWDANAEELILPSSTGQLGILTDHAPLLTALDIGVMRLKTGGNWISFVLMEGFAEVEDNKITILCNGAEEGASIDASTAQAALEKVTLLVDEAATKKEKIEATIELRKAKARLQAVA.

This sequence belongs to the ATPase epsilon chain family. In terms of assembly, F-type ATPases have 2 components, CF(1) - the catalytic core - and CF(0) - the membrane proton channel. CF(1) has five subunits: alpha(3), beta(3), gamma(1), delta(1), epsilon(1). CF(0) has three main subunits: a, b and c.

It is found in the plastid. The protein resides in the chloroplast thylakoid membrane. In terms of biological role, produces ATP from ADP in the presence of a proton gradient across the membrane. The protein is ATP synthase epsilon chain, chloroplastic of Emiliania huxleyi (Coccolithophore).